The primary structure comprises 502 residues: Probable glycine dehydrogenase (decarboxylating) subunit 2 (502 aa).

An N6-(pyridoxal phosphate)lysine modification is found at K273.

This sequence belongs to the GcvP family. C-terminal subunit subfamily. In terms of assembly, the glycine cleavage system is composed of four proteins: P, T, L and H. In this organism, the P 'protein' is a heterodimer of two subunits. Requires pyridoxal 5'-phosphate as cofactor.

The enzyme catalyses N(6)-[(R)-lipoyl]-L-lysyl-[glycine-cleavage complex H protein] + glycine + H(+) = N(6)-[(R)-S(8)-aminomethyldihydrolipoyl]-L-lysyl-[glycine-cleavage complex H protein] + CO2. Functionally, the glycine cleavage system catalyzes the degradation of glycine. The P protein binds the alpha-amino group of glycine through its pyridoxal phosphate cofactor; CO(2) is released and the remaining methylamine moiety is then transferred to the lipoamide cofactor of the H protein. The sequence is that of Probable glycine dehydrogenase (decarboxylating) subunit 2 from Pyrococcus horikoshii (strain ATCC 700860 / DSM 12428 / JCM 9974 / NBRC 100139 / OT-3).